The chain runs to 393 residues: GDP-mannose:cellobiosyl-diphosphopolyprenol alpha-mannosyltransferase (393 aa).

This sequence belongs to the glycosyltransferase group 1 family. Glycosyltransferase 4 subfamily.

The catalysed reaction is beta-D-Glc-(1-&gt;4)-alpha-D-Glc-di-trans,octa-cis-undecaprenyl diphosphate + GDP-alpha-D-mannose = alpha-D-Man-(1-&gt;3)-beta-D-Glc-(1-&gt;4)-alpha-D-Glc-1-di-trans,octa-cis-undecaprenyl diphosphate + GDP + H(+). Its function is as follows. Involved in the biosynthesis of the exopolysaccharide acetan, a water-soluble polysaccharide involved in production of bacterial cellulose (BC). The protein is GDP-mannose:cellobiosyl-diphosphopolyprenol alpha-mannosyltransferase (aceC) of Komagataeibacter xylinus (Gluconacetobacter xylinus).